A 308-amino-acid chain; its full sequence is tRNA dimethylallyltransferase 2 (308 aa).

ATP is bound at residue glycine 13 to threonine 20. Residue threonine 15–threonine 20 participates in substrate binding. The segment at aspartate 38–glutamine 41 is interaction with substrate tRNA.

This sequence belongs to the IPP transferase family. As to quaternary structure, monomer. It depends on Mg(2+) as a cofactor.

It carries out the reaction adenosine(37) in tRNA + dimethylallyl diphosphate = N(6)-dimethylallyladenosine(37) in tRNA + diphosphate. Its function is as follows. Catalyzes the transfer of a dimethylallyl group onto the adenine at position 37 in tRNAs that read codons beginning with uridine, leading to the formation of N6-(dimethylallyl)adenosine (i(6)A). In Bacteroides fragilis (strain YCH46), this protein is tRNA dimethylallyltransferase 2.